The chain runs to 75 residues: UPF0270 protein PST_1436 (75 aa).

It belongs to the UPF0270 family.

The protein is UPF0270 protein PST_1436 of Stutzerimonas stutzeri (strain A1501) (Pseudomonas stutzeri).